The chain runs to 281 residues: NADPH-dependent 7-cyano-7-deazaguanine reductase (281 aa).

Residue 87–89 (IES) participates in substrate binding. 89–90 (SK) lines the NADPH pocket. The active-site Thioimide intermediate is Cys-188. Catalysis depends on Asp-195, which acts as the Proton donor. Residue 227 to 228 (HE) participates in substrate binding. NADPH is bound at residue 256–257 (RG).

It belongs to the GTP cyclohydrolase I family. QueF type 2 subfamily. Homodimer.

Its subcellular location is the cytoplasm. The enzyme catalyses 7-aminomethyl-7-carbaguanine + 2 NADP(+) = 7-cyano-7-deazaguanine + 2 NADPH + 3 H(+). Its pathway is tRNA modification; tRNA-queuosine biosynthesis. Catalyzes the NADPH-dependent reduction of 7-cyano-7-deazaguanine (preQ0) to 7-aminomethyl-7-deazaguanine (preQ1). This chain is NADPH-dependent 7-cyano-7-deazaguanine reductase, found in Photobacterium profundum (strain SS9).